Here is a 275-residue protein sequence, read N- to C-terminus: Voltage-dependent calcium channel gamma-5 subunit (275 aa).

The next 4 membrane-spanning stretches (helical) occupy residues 8–28, 103–123, 129–149, and 176–196; these read ALTLLSSVFAVCGLGLLGIAV, FPLVSLFFMFIGFILNNIGHI, ILAFVSGIFFILSGLSLVVGL, and GWSFAFAAISFLLTESAGVMS.

The protein belongs to the PMP-22/EMP/MP20 family. CACNG subfamily. The L-type calcium channel is composed of five subunits: alpha-1, alpha-2/delta, beta and gamma. Acts as an auxiliary subunit for AMPA-selective glutamate receptors (AMPARs). Found in a complex with GRIA1, GRIA2, GRIA3, GRIA4, CNIH2, CNIH3, CACNG2, CACNG3, CACNG4, CACNG7 and CACNG8. Interacts with GRIA1, GRIA2, GRIA3 and GRIA4.

The protein resides in the membrane. Its subcellular location is the postsynaptic density membrane. Functionally, regulates the gating properties of AMPA-selective glutamate receptors (AMPARs). Modulates their gating properties by accelerating their rates of activation, deactivation and desensitization. Displays subunit-specific AMPA receptor regulation. Shows specificity for GRIA1, GRIA4 and the long isoform of GRIA2. Thought to stabilize the calcium channel in an inactivated (closed) state. The sequence is that of Voltage-dependent calcium channel gamma-5 subunit (CACNG5) from Homo sapiens (Human).